Here is a 458-residue protein sequence, read N- to C-terminus: O-acyltransferase WSD (458 aa).

Histidine 133 serves as the catalytic Proton acceptor.

The protein belongs to the long-chain O-acyltransferase family.

It catalyses the reaction a long chain fatty alcohol + a fatty acyl-CoA = a wax ester + CoA. The enzyme catalyses an acyl-CoA + a 1,2-diacyl-sn-glycerol = a triacyl-sn-glycerol + CoA. The protein operates within glycerolipid metabolism; triacylglycerol biosynthesis. Bifunctional wax ester synthase/diacylglycerol acyltransferase (WS and DGAT). Catalyzes the terminal and only committed step in triacylglycerol synthesis by using diacylglycerol and fatty acyl CoA as substrates. Required for storage lipid synthesis. WS uses C(12)-CoA to C(18)-CoA substrates whereas DGAT prefers C(20)-CoA. Upon expression in E.coli and Pseudomonas citronellolis (DSM 50332) both WS and DGAT activities increase. The chain is O-acyltransferase WSD (wax-dgaT) from Acinetobacter baylyi (strain ATCC 33305 / BD413 / ADP1).